The chain runs to 355 residues: tRNA (guanine-N(1)-)-methyltransferase (355 aa).

S-adenosyl-L-methionine-binding positions include Gly-109 and 129–134; that span reads IGDYVL.

The protein belongs to the RNA methyltransferase TrmD family. Homodimer.

The protein resides in the cytoplasm. It catalyses the reaction guanosine(37) in tRNA + S-adenosyl-L-methionine = N(1)-methylguanosine(37) in tRNA + S-adenosyl-L-homocysteine + H(+). Specifically methylates guanosine-37 in various tRNAs. The sequence is that of tRNA (guanine-N(1)-)-methyltransferase from Chlamydia abortus (strain DSM 27085 / S26/3) (Chlamydophila abortus).